The chain runs to 81 residues: Neuronatin (81 aa).

This sequence belongs to the neuronatin family.

Functionally, may participate in the maintenance of segment identity in the hindbrain and pituitary development, and maturation or maintenance of the overall structure of the nervous system. May function as a regulatory subunit of ion channels. In Homo sapiens (Human), this protein is Neuronatin (NNAT).